The sequence spans 369 residues: Polycomb group protein FERTILIZATION-INDEPENDENT ENDOSPERM (369 aa).

WD repeat units lie at residues 31–73 (EGKK…AISA), 81–123 (DKEE…IHKS), 126–166 (GHGD…CILI), 172–212 (GHRY…TYVE), 238–275 (IHTN…NSPG), 287–328 (VPMC…PVLI), and 335–368 (QSKS…DVIT).

It belongs to the WD repeat ESC family. In terms of assembly, interacts directly with MEA. These two proteins are probably indirectly associated with FIS2. In plants, PcG complexes are probably composed of a member of the EZ family (CLF or MEA), FIE, and a member of the VEFS family (FIS2, VRN2 or EMF2). Component of the plant homeodomain / polycomb repressive complex 2 (PHD-PRC2) large complex during prolonged cold, composed of core PRC2 components (VRN2, EZA1, FIE and MSI1), and three related PHD finger proteins (VIL1, VIL2 and VIN3) that mediates histone H3 trimethylation on 'Lys-27' (H3K27me3). Binds to ALP1. Expressed in cauline leaves, root and stems. In the male reproductive organ, it is expressed in the developing anther; and is abundant in microspore mother cells, in microsporocytes and in the tapetum, but is absent from vascular bundles, the connective tissue and the filament. It is also absent from pollen grains at subsequent developmental stages. In the developing female reproductive organs, it is highly expressed in all cells of the young ovules primordium before archesporial differentiation. Then, it is highly expressed in the ovule sporophytic tissue and the megaspore mother cell before meiosis, but is absent from placenta or the developing carpel. Then, it decreases.

The protein resides in the nucleus. Polycomb group (PcG) protein. PcG proteins act by forming multiprotein complexes, which are required to maintain the transcriptionally repressive state of homeotic genes throughout development. PcG proteins are not required to initiate repression, but to maintain it during later stages of development. They probably act via the methylation of histones, rendering chromatin heritably changed in its expressibility. Required to prevent the proliferation of the central cell by repressing unknown target genes before fertilization. Probably also involved in floral repression mechanism established during early plant development. Regulates the anteroposterior organization of the endosperm. Interacts with the promoter and represses the transcription of genes such as PHE1, that are paternally active and maternally silenced. This chain is Polycomb group protein FERTILIZATION-INDEPENDENT ENDOSPERM (FIE), found in Arabidopsis thaliana (Mouse-ear cress).